We begin with the raw amino-acid sequence, 177 residues long: ATP synthase subunit delta (177 aa).

This sequence belongs to the ATPase delta chain family. As to quaternary structure, F-type ATPases have 2 components, F(1) - the catalytic core - and F(0) - the membrane proton channel. F(1) has five subunits: alpha(3), beta(3), gamma(1), delta(1), epsilon(1). F(0) has three main subunits: a(1), b(2) and c(10-14). The alpha and beta chains form an alternating ring which encloses part of the gamma chain. F(1) is attached to F(0) by a central stalk formed by the gamma and epsilon chains, while a peripheral stalk is formed by the delta and b chains.

It localises to the cell inner membrane. In terms of biological role, f(1)F(0) ATP synthase produces ATP from ADP in the presence of a proton or sodium gradient. F-type ATPases consist of two structural domains, F(1) containing the extramembraneous catalytic core and F(0) containing the membrane proton channel, linked together by a central stalk and a peripheral stalk. During catalysis, ATP synthesis in the catalytic domain of F(1) is coupled via a rotary mechanism of the central stalk subunits to proton translocation. Functionally, this protein is part of the stalk that links CF(0) to CF(1). It either transmits conformational changes from CF(0) to CF(1) or is implicated in proton conduction. This is ATP synthase subunit delta from Shewanella amazonensis (strain ATCC BAA-1098 / SB2B).